Reading from the N-terminus, the 445-residue chain is tRNA(Ile2) 2-agmatinylcytidine synthetase TiaS (445 aa).

The segment at residues 278-349 (VVVRGSVAEK…KDGLVLNAEY (72 aa)) is a DNA-binding region (OB).

This sequence belongs to the TiaS family.

The protein resides in the cytoplasm. It carries out the reaction cytidine(34) in tRNA(Ile2) + agmatine + ATP + H2O = 2-agmatinylcytidine(34) in tRNA(Ile2) + AMP + 2 phosphate + 2 H(+). Functionally, ATP-dependent agmatine transferase that catalyzes the formation of 2-agmatinylcytidine (agm2C) at the wobble position (C34) of tRNA(Ile2), converting the codon specificity from AUG to AUA. This is tRNA(Ile2) 2-agmatinylcytidine synthetase TiaS from Thermofilum pendens (strain DSM 2475 / Hrk 5).